Consider the following 79-residue polypeptide: Three-finger toxin A2 (79 aa).

A signal peptide spans 1–21 (MKTLLLTLVVVTIVCLDLGNS). Intrachain disulfides connect Cys-24–Cys-41, Cys-34–Cys-59, Cys-63–Cys-71, and Cys-72–Cys-77.

The protein belongs to the three-finger toxin family. Short-chain subfamily. Expressed by the venom gland.

It is found in the secreted. The sequence is that of Three-finger toxin A2 from Micrurus laticollaris (Balsas coral snake).